Reading from the N-terminus, the 1905-residue chain is Low-density lipoprotein receptor-related protein 4 (1905 aa).

The N-terminal stretch at 1 to 20 (MRRQWGALLLGALLCAHGLA) is a signal peptide. Residues 21 to 1725 (SSPECACGRS…AAPGEGLHIS (1705 aa)) are Extracellular-facing. LDL-receptor class A domains are found at residues 26–67 (ACGR…DGCI), 70–106 (TCSP…QDCP), 109–144 (ECEE…EQCD), 147–183 (KCSD…ENCP), 190–226 (PCNL…SDCS), 230–266 (PCRS…RNCT), 269–305 (MCTA…ENCE), and 311–350 (QCAL…QNCR). Intrachain disulfides connect Cys27–Cys44, Cys34–Cys57, Cys51–Cys66, Cys71–Cys83, Cys78–Cys96, Cys90–Cys105, Cys110–Cys122, Cys117–Cys135, Cys129–Cys143, Cys148–Cys160, Cys155–Cys173, Cys167–Cys182, Cys191–Cys203, Cys198–Cys216, Cys210–Cys225, Cys231–Cys243, Cys238–Cys256, Cys250–Cys265, Cys270–Cys282, Cys277–Cys295, Cys289–Cys304, Cys312–Cys324, Cys319–Cys337, Cys331–Cys349, Cys358–Cys369, Cys365–Cys378, Cys380–Cys393, Cys399–Cys409, Cys405–Cys418, and Cys420–Cys433. A glycan (N-linked (GlcNAc...) asparagine) is linked at Asn264. An EGF-like 1; calcium-binding domain is found at 354-394 (GEENCNVNNGGCAQKCQMVRGAVQCTCHTGYRLTEDGHTCQ). The region spanning 395–434 (DVNECAEEGYCSQGCTNSEGAFQCWCETGYELRPDRRSCK) is the EGF-like 2; calcium-binding domain. 5 LDL-receptor class B repeats span residues 480–522 (ELVF…DWVH), 523–565 (DKLY…HPME), 566–609 (GTIY…DYAG), 610–652 (RRMY…FEDS), and 653–693 (LYWT…LHPQ). An N-linked (GlcNAc...) asparagine glycan is attached at Asn498. Residues 698 to 737 (GKNRCGDNNGGCTHLCLPSGQNYTCACPTGFRKISSHACA) form the EGF-like 3 domain. 3 disulfide bridges follow: Cys702/Cys713, Cys709/Cys722, and Cys724/Cys736. N-linked (GlcNAc...) asparagine glycosylation occurs at Asn719. LDL-receptor class B repeat units lie at residues 785–827 (DHVY…DWVT), 828–870 (NKLY…EPMG), 871–914 (GYMY…DYGS), 915–956 (QRLY…LYGE), and 957–998 (RIYW…FHRR). Residue Asn901 is glycosylated (N-linked (GlcNAc...) asparagine). N-linked (GlcNAc...) asparagine glycosylation is present at Asn1077. LDL-receptor class B repeat units lie at residues 1093–1135 (GKVY…DAIG), 1136–1178 (RKVY…YHEM), 1179–1222 (GFMY…DKAS), 1223–1263 (SQLL…LLDS), 1264–1306 (YIYW…DRAQ), 1397–1439 (GKVY…DWVA), 1440–1482 (RNLY…FPRK), 1483–1526 (GYLF…DYDT), 1527–1568 (RRIY…QDRW), and 1569–1610 (IYWT…SPQR). N-linked (GlcNAc...) asparagine glycosylation is found at Asn1415 and Asn1467. A disordered region spans residues 1659–1686 (PRATGMSEKSPVLPNTPPTTLYSSTTRT). Residues 1676-1686 (PTTLYSSTTRT) show a composition bias toward low complexity. Residues 1726–1746 (YAIGGLLSILLILVVIAALML) form a helical membrane-spanning segment. The Cytoplasmic portion of the chain corresponds to 1747–1905 (YRHKKSKFTD…ERKLSSESQV (159 aa)). The Endocytosis signal signature appears at 1766–1769 (NPSY). Positions 1852–1905 (ASSGSLDDTETEQLLQEEQSECSSVHTAATPERRGSLPDTGWKHERKLSSESQV) are disordered. Residues 1882–1905 (PERRGSLPDTGWKHERKLSSESQV) show a composition bias toward basic and acidic residues.

This sequence belongs to the LDLR family. Homooligomer. Interacts with MUSK; the heterodimer forms an AGRIN receptor complex that binds AGRIN resulting in activation of MUSK. Interacts (via the extracellular domain) with SOST; the interaction facilitates the inhibition of Wnt signaling. Interacts with MESD; the interaction promotes glycosylation of LRP4 and its cell-surface expression. As to expression, expressed in bone; present in osteoblasts and osteocytes. No expression is observed in osteoclast. Expressed in several regions of the brain.

The protein localises to the cell membrane. Its function is as follows. Mediates SOST-dependent inhibition of bone formation. Functions as a specific facilitator of SOST-mediated inhibition of Wnt signaling. Plays a key role in the formation and the maintenance of the neuromuscular junction (NMJ), the synapse between motor neuron and skeletal muscle. Directly binds AGRIN and recruits it to the MUSK signaling complex. Mediates the AGRIN-induced phosphorylation of MUSK, the kinase of the complex. The activation of MUSK in myotubes induces the formation of NMJ by regulating different processes including the transcription of specific genes and the clustering of AChR in the postsynaptic membrane. Alternatively, may be involved in the negative regulation of the canonical Wnt signaling pathway, being able to antagonize the LRP6-mediated activation of this pathway. More generally, has been proposed to function as a cell surface endocytic receptor binding and internalizing extracellular ligands for degradation by lysosomes. May play an essential role in the process of digit differentiation. This is Low-density lipoprotein receptor-related protein 4 (LRP4) from Homo sapiens (Human).